Consider the following 421-residue polypeptide: 5-hydroxytryptamine receptor 1A (421 aa).

Over 1–38 (MDMFSLGQGNNTTTSLEPFGTGGNDTGLSNVTFSYQVI) the chain is Extracellular. N-linked (GlcNAc...) asparagine glycans are attached at residues Asn-10, Asn-11, Asn-24, and Asn-30. A helical membrane pass occupies residues 39–59 (TSLLLGTLIFCAVLGNACVVA). At 60–73 (AIALERSLQNVANY) the chain is on the cytoplasmic side. A helical transmembrane segment spans residues 74-98 (LIGSLAVTDLMVSVLVLPMAALYQV). The Extracellular segment spans residues 99–107 (LNKWTLGQV). The helical transmembrane segment at 108-132 (TCDLFIALDVLCCTSSILHLCAIAL) threads the bilayer. An intrachain disulfide couples Cys-109 to Cys-187. Serotonin-binding residues include Asp-116 and Cys-120. The short motif at 133–135 (DRY) is the DRY motif; important for ligand-induced conformation changes element. Residues 133-152 (DRYWAITDPIDYVNKRTPRR) are Cytoplasmic-facing. Residues 153–174 (AAALISLTWLIGFLISIPPMLG) traverse the membrane as a helical segment. At 175 to 193 (WRTPEDRSNPNECTISKDH) the chain is on the extracellular side. A helical transmembrane segment spans residues 194–216 (GYTIYSTFGAFYIPLLLMLVLYG). At 217 to 346 (RIFRAARFRI…LARERKTVKT (130 aa)) the chain is on the cytoplasmic side. Residues 237–268 (GAGTSFGTSSAPPPKKSLNGQPGSGDCRRSAE) are disordered. 1D-myo-inositol 4-phosphate is bound by residues Thr-314, Lys-345, Thr-346, and Gly-352. The helical transmembrane segment at 347 to 370 (LGIIMGTFILCWLPFFIVALVLPF) threads the bilayer. Over 371-378 (CESSCHMP) the chain is Extracellular. Residues 379–403 (ELLGAIINWLGYSNSLLNPVIYAYF) form a helical membrane-spanning segment. An NPxxY motif; important for ligand-induced conformation changes and signaling motif is present at residues 396–400 (NPVIY). 1D-myo-inositol 4-phosphate contacts are provided by Phe-403, Asn-404, and Lys-405. The Cytoplasmic portion of the chain corresponds to 404–421 (NKDFQNAFKKIIKCKFCR).

Belongs to the G-protein coupled receptor 1 family. 5-hydroxytryptamine receptor subfamily. HTR1A sub-subfamily. Heterodimer; heterodimerizes with GPER1. Interacts with YIF1B. Interacts with GPR39 and GALR1. In terms of tissue distribution, most abundantly expressed in midbrain, in dorsal raphe and hippocampus. Detected at lower levels in amygdala and brain cortex.

The protein localises to the cell membrane. It localises to the cell projection. The protein resides in the dendrite. Its activity is regulated as follows. G-protein coupled receptor activity is regulated by lipids: phosphatidylinositol 4-phosphate increases HTR1A-mediated activity. Plays a role in the regulation of dopamine and 5-hydroxytryptamine levels in the brain, and thereby affects neural activity, mood and behavior. Plays a role in the response to anxiogenic stimuli. In terms of biological role, G-protein coupled receptor for 5-hydroxytryptamine (serotonin). Also functions as a receptor for various drugs and psychoactive substances. Ligand binding causes a conformation change that triggers signaling via guanine nucleotide-binding proteins (G proteins) and modulates the activity of downstream effectors, such as adenylate cyclase. HTR1A is coupled to G(i)/G(o) G alpha proteins and mediates inhibitory neurotransmission: signaling inhibits adenylate cyclase activity and activates a phosphatidylinositol-calcium second messenger system that regulates the release of Ca(2+) ions from intracellular stores. Beta-arrestin family members regulate signaling by mediating both receptor desensitization and resensitization processes. In Mus musculus (Mouse), this protein is 5-hydroxytryptamine receptor 1A (Htr1a).